The following is a 211-amino-acid chain: Metalloproteinase inhibitor 3 (211 aa).

The first 23 residues, 1 to 23, serve as a signal peptide directing secretion; it reads MTPWLGLVVLLSCWSLGHWGAEA. Cysteine 24 is a Zn(2+) binding site. Involved in metalloproteinase-binding regions lie at residues 24-27 and 88-89; these read CTCS and ES. 6 disulfide bridges follow: cysteine 24-cysteine 91, cysteine 26-cysteine 118, cysteine 36-cysteine 143, cysteine 145-cysteine 192, cysteine 150-cysteine 155, and cysteine 163-cysteine 184. Residues 24 to 143 form the NTR domain; the sequence is CTCSPSHPQD…GLNYRYHLGC (120 aa). The tract at residues 105-188 is mediates interaction with EFEMP1; the sequence is TGRVYEGKMY…SKHYACIRQK (84 aa).

This sequence belongs to the protease inhibitor I35 (TIMP) family. Interacts with EFEMP1. Interacts with KDR. Highest levels are found in kidney, lung and brain followed by ovary and uterus. Low levels are found in bone.

The protein localises to the secreted. It is found in the extracellular space. It localises to the extracellular matrix. Its function is as follows. Mediates a variety of processes including matrix regulation and turnover, inflammation, and angiogenesis, through reversible inhibition of zinc protease superfamily enzymes, primarily matrix metalloproteinases (MMPs). Regulates extracellular matrix (ECM) remodeling through inhibition of matrix metalloproteinases (MMP) including MMP-1, MMP-2, MMP-3, MMP-7, MMP-9, MMP-13, MMP-14 and MMP-15. Additionally, modulates the processing of amyloid precursor protein (APP) and apolipoprotein E receptor ApoER2 by inhibiting two alpha-secretases ADAM10 and ADAM17. Functions as a tumor suppressor and a potent inhibitor of angiogenesis. Exerts its anti-angiogenic effect by directly interacting with vascular endothelial growth factor (VEGF) receptor-2/KDR, preventing its binding to the VEGFA ligand. Selectively induces apoptosis in angiogenic endothelial cells through a caspase-independent cell death pathway. Mechanistically, inhibits matrix-induced focal adhesion kinase PTK2 tyrosine phosphorylation and association with paxillin/PXN and disrupts the incorporation of ITGB3, PTK2 and PXN into focal adhesion contacts on the matrix. This Mus musculus (Mouse) protein is Metalloproteinase inhibitor 3 (Timp3).